The sequence spans 6668 residues: Centrosome-associated protein CEP250 (6668 aa).

Coiled-coil stretches lie at residues 562–589 (KAFHEAQLARAREETKTLRQKIAALQQD), 632–666 (TRELTERLQAALAVNESLREELLEARQQLSLLRAS), 873–988 (HTEC…LRSS), 1042–1087 (LRMS…HEAA), 1252–1307 (VEDL…AVSR), 1333–1427 (LESL…LEKK), 1501–1538 (RPAAEEAVERETNLKKELEAAHQQKNEAEEMCKELGTQ), 1594–1688 (REAL…SEVA), 1896–1930 (HDILVGRVEELERMQTELEEQRRMLTKHLQQTTEK), 1975–2224 (EETL…AKQS), 2298–3272 (AEDE…LKME), 3298–3436 (QQEL…SRAE), 3526–3599 (LVQL…AKEE), 3697–3773 (CASL…EERR), 3856–4137 (TEML…VEAE), 4170–4486 (RRKL…LRER), 4515–5078 (LETL…FRRR), 5165–5202 (LASLGQELEEERWQVKQLQELLKEVDSARKEALEQETL), 5298–5731 (LREK…QHRV), and 5927–6119 (TQAL…LWRQ).

Proteolytically cleaved; only the full-length form localizes to the inner core, while processed version also localizes to the outer core during the onset of cell division.

It is found in the cytoplasm. The protein resides in the cytoskeleton. Its subcellular location is the microtubule organizing center. The protein localises to the centrosome. Its function is as follows. Part of the centrosome inner core complex. Required for the linking of centrosomal inner and outer cores. In Toxoplasma gondii (strain ATCC 50611 / Me49), this protein is Centrosome-associated protein CEP250.